The following is a 223-amino-acid chain: MRARRLVMLRHGQTDYNVGSRMQGQLDTELSELGRTQAVAAAEVLGKRQPLLIVSSDLRRAYDTAVKLGERTGLVVRVDTRLRETHLGDWQGLTHAQIDADAPGARLAWREDATWAPHGGESRVDVAARSRPLVAELVASEPEWGGADEPDRPVVLVAHGGLIAALSAALLKLPVANWPALGGMGNASWTQLSGHWAPGSDFESIRWRLDVWNASAQVSSDVL.

Substrate is bound at residue Arg-10. The active-site Tele-phosphohistidine intermediate is the His-11. Residue Lys-47 forms an Isoglutamyl lysine isopeptide (Lys-Gln) (interchain with Q-Cter in protein Pup) linkage. Residue Arg-60 coordinates substrate. The active-site Proton donor/acceptor is Glu-84. Position 159 (His-159) interacts with substrate.

It belongs to the phosphoglycerate mutase family. In terms of assembly, homodimer. Dimerization of the enzyme is essential for its dephosphorylation activity.

It carries out the reaction (2R)-2-O-(alpha-D-glucopyranosyl)-3-phospho-glycerate + H2O = (2R)-2-O-(alpha-D-glucopyranosyl)-glycerate + phosphate. It catalyses the reaction 2-O-(alpha-D-mannosyl)-3-phosphoglycerate + H2O = (2R)-2-O-(alpha-D-mannosyl)-glycerate + phosphate. The catalysed reaction is (2R)-2-O-[alpha-D-mannopyranosyl-(1-&gt;2)-alpha-D-glucopyranosyl]-3-phospho-glycerate + H2O = (2R)-2-O-[alpha-D-mannopyranosyl-(1-&gt;2)-alpha-D-glucopyranosyl]-glycerate + phosphate. With respect to regulation, progressively inhibited by cobalt ions at concentrations between 10-50 mM and by copper ions at any concentration between 1-50 mM. Functionally, involved in the biosynthesis of mycobacterial methylglucose lipopolysaccharides (MGLPs). Catalyzes the dephosphorylation of glucosyl-3-phosphoglycerate (GPG) to glucosylglycerate (GG). GPG is the preferred substrate, but GpgP also exhibits low dephosphorylation activity on mannosyl-3-phosphoglycerate (MPG) and mannosylglucosyl-3-phosphoglycerate (MGPG) in vitro. Shows only trace of phosphoglycerate mutase (PGM) activity. This chain is Glucosyl-3-phosphoglycerate phosphatase, found in Mycobacterium tuberculosis (strain ATCC 25618 / H37Rv).